The following is a 482-amino-acid chain: DNA polymerase II small subunit (482 aa).

This sequence belongs to the DNA polymerase delta/II small subunit family. In terms of assembly, heterodimer of a large subunit and a small subunit.

The catalysed reaction is DNA(n) + a 2'-deoxyribonucleoside 5'-triphosphate = DNA(n+1) + diphosphate. It catalyses the reaction Exonucleolytic cleavage in the 3'- to 5'-direction to yield nucleoside 5'-phosphates.. Its function is as follows. Possesses two activities: a DNA synthesis (polymerase) and an exonucleolytic activity that degrades single-stranded DNA in the 3' to 5' direction. Has a template-primer preference which is characteristic of a replicative DNA polymerase. The polypeptide is DNA polymerase II small subunit (polB) (Methanothermobacter thermautotrophicus (strain ATCC 29096 / DSM 1053 / JCM 10044 / NBRC 100330 / Delta H) (Methanobacterium thermoautotrophicum)).